The sequence spans 241 residues: Alpha/beta-tubulin-N-acetyltransferase 9 (241 aa).

The 148-residue stretch at 34–181 folds into the N-acetyltransferase domain; it reads EELRHLTASE…VTLRLAVSEP (148 aa).

Belongs to the acetyltransferase family. GNAT subfamily.

It catalyses the reaction N-terminal L-methionyl-[tubulin] + acetyl-CoA = N-terminal N(alpha)-acetyl-L-methionyl-[tubulin] + CoA + H(+). In terms of biological role, N-acetyltransferase that mediates the acetylation of the N-terminal residues of alpha- and beta-tubulin. The chain is Alpha/beta-tubulin-N-acetyltransferase 9 (Nat9) from Mus musculus (Mouse).